A 67-amino-acid chain; its full sequence is Cell division protein ZapB (67 aa).

Residues 3 to 59 adopt a coiled-coil conformation; the sequence is LELLSQLETKIQTALETIELLKLELDEEKEKAANLAEQNHQLKQELSSWNDKITGLV.

Belongs to the ZapB family. In terms of assembly, homodimer. The ends of the coiled-coil dimer bind to each other, forming polymers. Interacts with FtsZ.

Its subcellular location is the cytoplasm. In terms of biological role, non-essential, abundant cell division factor that is required for proper Z-ring formation. It is recruited early to the divisome by direct interaction with FtsZ, stimulating Z-ring assembly and thereby promoting cell division earlier in the cell cycle. Its recruitment to the Z-ring requires functional FtsA or ZipA. This chain is Cell division protein ZapB, found in Shewanella amazonensis (strain ATCC BAA-1098 / SB2B).